Here is a 448-residue protein sequence, read N- to C-terminus: Guanine deaminase (448 aa).

H74 and H76 together coordinate Zn(2+). Substrate contacts are provided by residues 76-79 (HAPQ), 204-205 (RF), 231-234 (HISE), and D319. Zn(2+) is bound by residues H231 and D319.

It belongs to the metallo-dependent hydrolases superfamily. ATZ/TRZ family. Requires Zn(2+) as cofactor.

The catalysed reaction is guanine + H2O + H(+) = xanthine + NH4(+). It functions in the pathway purine metabolism; guanine degradation; xanthine from guanine: step 1/1. Strongly inhibited by p-chloromercuribenzoate (PCMB). Potassium cyanide (KCN) strongly inhibits activity towards 7,8-dihydropterin but has almost no effect on activity towards guanine. Pterin inhibits activity towards guanine but has little effect on activity towards 7,8-dihydropterin. Catalyzes the hydrolytic deamination of guanine, producing xanthine and ammonia. Also has 7,8-dihydropterin deaminase activity, which plays a role in synthesis of the red eye pigment aurodrosopterin. The sequence is that of Guanine deaminase from Drosophila melanogaster (Fruit fly).